The following is a 327-amino-acid chain: GPI-linked NAD(P)(+)--arginine ADP-ribosyltransferase 1 (327 aa).

A signal peptide spans 1–22; it reads MQMPAMMSLLLVSVGLMEALQA. Intrachain disulfides connect Cys53/Cys277 and Cys174/Cys224. An N-linked (GlcNAc...) asparagine glycan is attached at Asn65. The region spanning 73-273 is the TR mART core domain; the sequence is QVYADSWTLA…IYLRALGKHS (201 aa). NAD(+) contacts are provided by Tyr121 and Arg179. Residues Arg179 and Ser202 contribute to the active site. NAD(+) is bound at residue Ser233. Glu240 is an active-site residue. An N-linked (GlcNAc...) asparagine glycan is attached at Asn253. Residue Ser295 is the site of GPI-anchor amidated serine attachment. A propeptide spans 296–327 (removed in mature form); the sequence is AMGQSPLSAVWSLLLLLWFLVVRAFPDGPGLL.

This sequence belongs to the Arg-specific ADP-ribosyltransferase family.

Its subcellular location is the sarcoplasmic reticulum membrane. The catalysed reaction is L-arginyl-[protein] + NAD(+) = N(omega)-(ADP-D-ribosyl)-L-arginyl-[protein] + nicotinamide + H(+). In terms of biological role, has ADP-ribosyltransferase activity toward GLP1R. This Homo sapiens (Human) protein is GPI-linked NAD(P)(+)--arginine ADP-ribosyltransferase 1 (ART1).